Consider the following 1039-residue polypeptide: uncharacterized protein (1039 aa).

Over residues 1–19 (MSLLMAHRKSKSSQRKLRN) the composition is skewed to basic residues. The tract at residues 1–38 (MSLLMAHRKSKSSQRKLRNRSSSLTPQKRRIRASKGSH) is disordered.

This is an uncharacterized protein from Sinorhizobium fredii (strain NBRC 101917 / NGR234).